The chain runs to 277 residues: Large ribosomal subunit protein uL2 (277 aa).

Positions 222 to 277 (GVAMNPVDHPHGGGEGRTSGGRHPVSPWGKPTKGKRTRSNKATDKFIMRTRHQRKK) are disordered.

This sequence belongs to the universal ribosomal protein uL2 family. Part of the 50S ribosomal subunit. Forms a bridge to the 30S subunit in the 70S ribosome.

Its function is as follows. One of the primary rRNA binding proteins. Required for association of the 30S and 50S subunits to form the 70S ribosome, for tRNA binding and peptide bond formation. It has been suggested to have peptidyltransferase activity; this is somewhat controversial. Makes several contacts with the 16S rRNA in the 70S ribosome. The protein is Large ribosomal subunit protein uL2 of Bartonella henselae (strain ATCC 49882 / DSM 28221 / CCUG 30454 / Houston 1) (Rochalimaea henselae).